Consider the following 563-residue polypeptide: Beta-catenin-like protein 1 (563 aa).

Position 1 is an N-acetylmethionine (M1). Positions 1 to 49 (MDVGELLSYQPNRGTKRPRDDEEEEQKMRRKQTGTRERGRYREEEMTVV) are disordered. The Nuclear localization signal motif lies at 16–33 (KRPRDDEEEEQKMRRKQT). Basic and acidic residues predominate over residues 34–45 (GTRERGRYREEE). HEAT repeat units follow at residues 79 to 129 (ESSV…VVAT) and 134 to 176 (YHLL…TLHE). N6-acetyllysine is present on K91. Positions 130 to 140 (MPDLYHLLVEL) match the Nuclear export signal (NES) motif. ARM repeat units follow at residues 178–228 (EEGA…MAEF), 229–273 (RPEM…LQDN), 274–323 (DENR…CLML), 325–363 (SNRE…AMIG), and 364–417 (PEGT…LLRN). Position 389 is a phosphoserine (S389). The stretch at 476–540 (DTEEEFYLRR…HIIKEYAENI (65 aa)) forms a coiled coil. Position 545 is a phosphoserine (S545).

Component of the PRP19-CDC5L splicing complex composed of a core complex comprising a homotetramer of PRPF19, CDC5L, PLRG1 and BCAS2, and at least three less stably associated proteins CTNNBL1, CWC15 and HSPA8. Interacts directly with CWC15 and CDC5L in the complex. Interacts with AICDA; the interaction is important for the antibody diversification activity of AICDA. Interacts with PRPF31 (via its NLS). Interacts (via its N-terminal NLS) with KPNA1 and KPNA2. As to expression, widely expressed with highest levels in skeletal muscle, placenta, heart, spleen, testis and thyroid.

The protein localises to the nucleus. It localises to the cytoplasm. In terms of biological role, component of the PRP19-CDC5L complex that forms an integral part of the spliceosome and is required for activating pre-mRNA splicing. Participates in AID/AICDA-mediated somatic hypermutation (SHM) and class-switch recombination (CSR), 2 processes resulting in the production of high-affinity, mutated isotype-switched antibodies. In Homo sapiens (Human), this protein is Beta-catenin-like protein 1 (CTNNBL1).